Here is a 543-residue protein sequence, read N- to C-terminus: Chaperonin GroEL (543 aa).

Residues 29–32 (TLGP), 86–90 (DGTTT), Gly-413, 478–480 (DAL), and Asp-494 each bind ATP. A disordered region spans residues 524–543 (PEPEAPAVPAGMPGGMGGMY).

This sequence belongs to the chaperonin (HSP60) family. In terms of assembly, forms a cylinder of 14 subunits composed of two heptameric rings stacked back-to-back. Interacts with the co-chaperonin GroES.

It localises to the cytoplasm. It carries out the reaction ATP + H2O + a folded polypeptide = ADP + phosphate + an unfolded polypeptide.. In terms of biological role, together with its co-chaperonin GroES, plays an essential role in assisting protein folding. The GroEL-GroES system forms a nano-cage that allows encapsulation of the non-native substrate proteins and provides a physical environment optimized to promote and accelerate protein folding. The polypeptide is Chaperonin GroEL (Ruminiclostridium cellulolyticum (strain ATCC 35319 / DSM 5812 / JCM 6584 / H10) (Clostridium cellulolyticum)).